A 67-amino-acid chain; its full sequence is Peptide Ctry2606 (67 aa).

Residues 1–23 form the signal peptide; that stretch reads MKTQTALFSFFLVLLLVATQTEG. L33 carries the post-translational modification Leucine amide. Positions 37-67 are excised as a propeptide; the sequence is ALRNQNFVDYAFDPSLSAADWRALETLLEEY.

This sequence belongs to the non-disulfide-bridged peptide (NDBP) superfamily. Short antimicrobial peptide (group 4) family. In terms of tissue distribution, expressed by the venom gland.

The protein localises to the secreted. Its function is as follows. Antimicrobial peptide. The protein is Peptide Ctry2606 of Chaerilus tryznai (Scorpion).